A 394-amino-acid polypeptide reads, in one-letter code: Protein-glutamate methylesterase/protein-glutamine glutaminase (394 aa).

Residues 1–24 (MSDGFGRPPPPAPAGHPTGAAGGD) form a disordered region. Residues 15-24 (GHPTGAAGGD) show a composition bias toward low complexity. Residues 27–145 (RVMVVDDSAV…EIGGADAFKR (119 aa)) enclose the Response regulatory domain. At Asp78 the chain carries 4-aspartylphosphate. Positions 191–393 (PAPAVGSVGQ…PYIRKFASRA (203 aa)) constitute a CheB-type methylesterase domain. Catalysis depends on residues Ser211, His238, and Asp335.

This sequence belongs to the CheB family. Phosphorylated by CheA. Phosphorylation of the N-terminal regulatory domain activates the methylesterase activity.

The protein resides in the cytoplasm. It carries out the reaction [protein]-L-glutamate 5-O-methyl ester + H2O = L-glutamyl-[protein] + methanol + H(+). It catalyses the reaction L-glutaminyl-[protein] + H2O = L-glutamyl-[protein] + NH4(+). Its function is as follows. Involved in chemotaxis. Part of a chemotaxis signal transduction system that modulates chemotaxis in response to various stimuli. Catalyzes the demethylation of specific methylglutamate residues introduced into the chemoreceptors (methyl-accepting chemotaxis proteins or MCP) by CheR. Also mediates the irreversible deamidation of specific glutamine residues to glutamic acid. The sequence is that of Protein-glutamate methylesterase/protein-glutamine glutaminase from Azospirillum brasilense.